The following is a 518-amino-acid chain: Calcium/calmodulin-dependent protein kinase kinase cmkC (518 aa).

The tract at residues 1–72 is disordered; the sequence is MANEGAGSLQ…SEYTLSQDDG (72 aa). Composition is skewed to polar residues over residues 8–17 and 60–71; these read SLQQDASPGS and NARSEYTLSQDD. The Protein kinase domain maps to 81–376; that stretch reads YVIKQEIGRG…MDELREHPWV (296 aa). ATP-binding positions include 87–95 and lysine 109; that span reads IGRGSFGAV. The interval 119-149 is disordered; sequence RAKSQLLRQSRGPKRSSRWPKLPFSSPGTGT. The active-site Proton acceptor is the aspartate 243. The interval 404–409 is autoinhibitory domain; it reads FSAITK. The calmodulin-binding stretch occupies residues 407 to 431; the sequence is ITKNFGHVLAVMKAAKKFKSLQGPT. A disordered region spans residues 453 to 472; that stretch reads PTQMDPEESVSLPSPLPYKK.

This sequence belongs to the protein kinase superfamily. Ser/Thr protein kinase family.

It catalyses the reaction L-seryl-[protein] + ATP = O-phospho-L-seryl-[protein] + ADP + H(+). The enzyme catalyses L-threonyl-[protein] + ATP = O-phospho-L-threonyl-[protein] + ADP + H(+). Its activity is regulated as follows. Activated by Ca(2+)/calmodulin. Binding of calmodulin may relieve intrasteric autoinhibition. In terms of biological role, calcium/calmodulin-dependent protein kinase that operates in the calcium-triggered CaMKK-CaMK1 signaling cascade. Phosphorylates and activates cmkB in vitro. Required in G1-phase of the cell cycle for proper timing of the initial nuclear division after germination as well as for subsequent nuclear division cycles. Required for the normal temporal regulation of nimX activity. The sequence is that of Calcium/calmodulin-dependent protein kinase kinase cmkC from Emericella nidulans (Aspergillus nidulans).